A 455-amino-acid chain; its full sequence is UDP-N-acetylmuramoylalanine--D-glutamate ligase (455 aa).

Residue 118 to 124 coordinates ATP; the sequence is GSNAKST.

It belongs to the MurCDEF family.

It is found in the cytoplasm. It catalyses the reaction UDP-N-acetyl-alpha-D-muramoyl-L-alanine + D-glutamate + ATP = UDP-N-acetyl-alpha-D-muramoyl-L-alanyl-D-glutamate + ADP + phosphate + H(+). It functions in the pathway cell wall biogenesis; peptidoglycan biosynthesis. In terms of biological role, cell wall formation. Catalyzes the addition of glutamate to the nucleotide precursor UDP-N-acetylmuramoyl-L-alanine (UMA). In Chromohalobacter salexigens (strain ATCC BAA-138 / DSM 3043 / CIP 106854 / NCIMB 13768 / 1H11), this protein is UDP-N-acetylmuramoylalanine--D-glutamate ligase.